We begin with the raw amino-acid sequence, 262 residues long: Shikimate dehydrogenase (NADP(+)) (262 aa).

Residues 15–17 (SRS) and Thr-62 each bind shikimate. The active-site Proton acceptor is the Lys-66. An NADP(+)-binding site is contributed by Glu-78. Positions 87 and 102 each coordinate shikimate. NADP(+) is bound by residues 126-130 (GAGGA), 150-155 (NRTLAR), and Met-214. A shikimate-binding site is contributed by Tyr-216. Gly-236 contributes to the NADP(+) binding site.

This sequence belongs to the shikimate dehydrogenase family. In terms of assembly, homodimer.

The catalysed reaction is shikimate + NADP(+) = 3-dehydroshikimate + NADPH + H(+). The protein operates within metabolic intermediate biosynthesis; chorismate biosynthesis; chorismate from D-erythrose 4-phosphate and phosphoenolpyruvate: step 4/7. Involved in the biosynthesis of the chorismate, which leads to the biosynthesis of aromatic amino acids. Catalyzes the reversible NADPH linked reduction of 3-dehydroshikimate (DHSA) to yield shikimate (SA). In Acinetobacter baumannii (strain ATCC 17978 / DSM 105126 / CIP 53.77 / LMG 1025 / NCDC KC755 / 5377), this protein is Shikimate dehydrogenase (NADP(+)).